The sequence spans 342 residues: N-acetyl-gamma-glutamyl-phosphate reductase (342 aa).

Residue C148 is part of the active site.

It belongs to the NAGSA dehydrogenase family. Type 1 subfamily.

Its subcellular location is the cytoplasm. The enzyme catalyses N-acetyl-L-glutamate 5-semialdehyde + phosphate + NADP(+) = N-acetyl-L-glutamyl 5-phosphate + NADPH + H(+). The protein operates within amino-acid biosynthesis; L-arginine biosynthesis; N(2)-acetyl-L-ornithine from L-glutamate: step 3/4. Functionally, catalyzes the NADPH-dependent reduction of N-acetyl-5-glutamyl phosphate to yield N-acetyl-L-glutamate 5-semialdehyde. In Methanococcus vannielii (strain ATCC 35089 / DSM 1224 / JCM 13029 / OCM 148 / SB), this protein is N-acetyl-gamma-glutamyl-phosphate reductase.